Consider the following 128-residue polypeptide: uncharacterized protein (128 aa).

A run of 3 helical transmembrane segments spans residues 30–50, 65–85, and 93–113; these read ILFT…LGSS, VFRG…LGIQ, and WEVA…PDIV.

It is found in the cell membrane. This is an uncharacterized protein from Rickettsia prowazekii (strain Madrid E).